Here is a 301-residue protein sequence, read N- to C-terminus: 2-oxo-3-(phosphooxy)propyl 3-oxoalkanoate synthase (301 aa).

The protein belongs to the AfsA family.

The catalysed reaction is a medium-chain 3-oxoacyl-[ACP] + dihydroxyacetone phosphate = a (4-alkanoyl-5-oxo-2,5-dihydrofuran-3-yl)methyl phosphate + holo-[ACP] + H2O. Functionally, involved in the biosynthesis of A factor (2-isocapryloyl-3R-hydroxymethyl-gamma-butyrolactone), a gamma-butyrolactone autoregulator that triggers secondary metabolism and morphogenesis in Streptomyces. Catalyzes beta-ketoacyl transfer from 8-methyl-3-oxononanoyl-acyl carrier protein (ACP) to the hydroxyl group of dihydroxyacetone phosphate (DHAP), thus producing an 8-methyl-3-oxononanoyl-DHAP ester. This Streptomyces griseus protein is 2-oxo-3-(phosphooxy)propyl 3-oxoalkanoate synthase.